The following is a 259-amino-acid chain: 3'-5' ssDNA/RNA exonuclease TatD (259 aa).

Positions 92, 128, and 153 each coordinate a divalent metal cation.

The protein belongs to the metallo-dependent hydrolases superfamily. TatD-type hydrolase family. TatD subfamily. Monomer. The cofactor is Mg(2+).

It localises to the cytoplasm. Its function is as follows. 3'-5' exonuclease that prefers single-stranded DNA and RNA. May play a role in the H(2)O(2)-induced DNA damage repair. The polypeptide is 3'-5' ssDNA/RNA exonuclease TatD (Erwinia tasmaniensis (strain DSM 17950 / CFBP 7177 / CIP 109463 / NCPPB 4357 / Et1/99)).